Here is a 122-residue protein sequence, read N- to C-terminus: Autophagy-related protein 8a (122 aa).

The disordered stretch occupies residues 1–21; the sequence is MAKSSFKISNPLEARMSESSR. The Phosphatidylethanolamine amidated glycine moiety is linked to residue G117. Positions 118 to 122 are cleaved as a propeptide — removed in mature form; that stretch reads SLTVA.

This sequence belongs to the ATG8 family. As to quaternary structure, interacts with ATG4B. Interacts with NBR1. The C-terminal 5 residues are removed by ATG4 to expose Gly-117 at the C-terminus. This Gly-117 forms then a thioester bond with the 'Cys-558' of ATG7 (E1-like activating enzyme) before being transferred to the 'Cys-258' of ATG3 (the specific E2 conjugating enzyme), in order to be finally amidated with phosphatidylethanolamine. This lipid modification anchors ATG8 to autophagosomes. Constitutively expressed.

Its subcellular location is the cytoplasmic vesicle. It is found in the autophagosome membrane. The protein localises to the vacuole membrane. The protein resides in the cytoplasm. It localises to the cytoskeleton. Its function is as follows. Ubiquitin-like modifier involved in autophagosomes formation. May mediate the delivery of the autophagosomes to the vacuole via the microtubule cytoskeleton. This is Autophagy-related protein 8a (ATG8A) from Arabidopsis thaliana (Mouse-ear cress).